The primary structure comprises 190 residues: Xanthine phosphoribosyltransferase (190 aa).

The xanthine site is built by Leu20 and Asn27. 128–132 (ANGNA) provides a ligand contact to 5-phospho-alpha-D-ribose 1-diphosphate. Lys156 provides a ligand contact to xanthine.

The protein belongs to the purine/pyrimidine phosphoribosyltransferase family. Xpt subfamily. Homodimer.

It localises to the cytoplasm. The enzyme catalyses XMP + diphosphate = xanthine + 5-phospho-alpha-D-ribose 1-diphosphate. Its pathway is purine metabolism; XMP biosynthesis via salvage pathway; XMP from xanthine: step 1/1. Its function is as follows. Converts the preformed base xanthine, a product of nucleic acid breakdown, to xanthosine 5'-monophosphate (XMP), so it can be reused for RNA or DNA synthesis. This Clostridium novyi (strain NT) protein is Xanthine phosphoribosyltransferase.